The chain runs to 405 residues: Phosphatidylinositol 5-phosphate 4-kinase type-2 alpha (405 aa).

Residue Ala-2 is modified to N-acetylalanine. Residue Thr-3 is modified to Phosphothreonine. Position 14 is a phosphoserine (Ser-14). A PIPK domain is found at 33-405; the sequence is ASDPLLSVLM…RFLDFIGHIL (373 aa). The segment at 59 to 65 is required for interaction with PIP5K1A; the sequence is VMLMPDD. Residues Lys-89 and Lys-145 each carry the N6-acetyllysine modification. A disordered region spans residues 288-328; that stretch reads QEEVECEENDGEEEGESDSTHPIGTPPDSPGNTLNSSPPLA. Over residues 289 to 304 the composition is skewed to acidic residues; that stretch reads EEVECEENDGEEEGES.

As to quaternary structure, homodimer. Interacts with PIP4K2B; the interaction may regulate localization to the nucleus. Probably interacts with PIP5K1A; the interaction inhibits PIP5K1A kinase activity. Post-translationally, phosphorylated in tyrosines. Phosphorylation is induced by light and increases kinase activity. Detected in rod photoreceptor cells.

It is found in the cell membrane. Its subcellular location is the nucleus. The protein localises to the lysosome. It localises to the cytoplasm. The protein resides in the photoreceptor inner segment. It is found in the cell projection. Its subcellular location is the cilium. The protein localises to the photoreceptor outer segment. It catalyses the reaction a 1,2-diacyl-sn-glycero-3-phospho-(1D-myo-inositol-5-phosphate) + ATP = a 1,2-diacyl-sn-glycero-3-phospho-(1D-myo-inositol-4,5-bisphosphate) + ADP + H(+). It carries out the reaction 1,2-dihexadecanoyl-sn-glycero-3-phospho-(1D-myo-inositol-5-phosphate) + ATP = 1,2-dihexadecanoyl-sn-glycero-3-phospho-(1D-myo-inositol-4,5-bisphosphate) + ADP + H(+). The catalysed reaction is 1,2-dihexadecanoyl-sn-glycero-3-phospho-(1D-myo-inositol-5-phosphate) + GTP = 1,2-dihexadecanoyl-sn-glycero-3-phospho-(1D-myo-inositol-4,5-bisphosphate) + GDP + H(+). Its activity is regulated as follows. In rod outer segments, activated by light. Its function is as follows. Catalyzes the phosphorylation of phosphatidylinositol 5-phosphate (PtdIns5P) on the fourth hydroxyl of the myo-inositol ring, to form phosphatidylinositol 4,5-bisphosphate (PtdIns(4,5)P2). Has both ATP- and GTP-dependent kinase activities. May exert its function by regulating the levels of PtdIns5P, which functions in the cytosol by increasing AKT activity and in the nucleus signals through ING2. May regulate the pool of cytosolic PtdIns5P in response to the activation of tyrosine phosphorylation. Required for lysosome-peroxisome membrane contacts and intracellular cholesterol transport through modulating peroxisomal PtdIns(4,5)P2 level. In collaboration with PIP4K2B, has a role in mediating autophagy in times of nutrient stress. Required for autophagosome-lysosome fusion and the regulation of cellular lipid metabolism. Negatively regulates insulin signaling through a catalytic-independent mechanism. PIP4Ks interact with PIP5Ks and suppress PIP5K-mediated PtdIns(4,5)P2 synthesis and insulin-dependent conversion to PtdIns(3,4,5)P3. May be involved in thrombopoiesis, and the terminal maturation of megakaryocytes and regulation of their size. The sequence is that of Phosphatidylinositol 5-phosphate 4-kinase type-2 alpha from Mus musculus (Mouse).